The primary structure comprises 486 residues: tRNA sulfurtransferase (486 aa).

Residues 61–165 enclose the THUMP domain; sequence AILIDVLGRI…NDHMMLIKAR (105 aa). ATP contacts are provided by residues 183–184, Lys-265, Gly-287, and Gln-296; that span reads LI. A disulfide bridge links Cys-344 with Cys-456. In terms of domain architecture, Rhodanese spans 404-481; it reads LSANDVILDI…NGFANVRVFA (78 aa). Residue Cys-456 is the Cysteine persulfide intermediate of the active site.

It belongs to the ThiI family.

Its subcellular location is the cytoplasm. It carries out the reaction [ThiI sulfur-carrier protein]-S-sulfanyl-L-cysteine + a uridine in tRNA + 2 reduced [2Fe-2S]-[ferredoxin] + ATP + H(+) = [ThiI sulfur-carrier protein]-L-cysteine + a 4-thiouridine in tRNA + 2 oxidized [2Fe-2S]-[ferredoxin] + AMP + diphosphate. It catalyses the reaction [ThiS sulfur-carrier protein]-C-terminal Gly-Gly-AMP + S-sulfanyl-L-cysteinyl-[cysteine desulfurase] + AH2 = [ThiS sulfur-carrier protein]-C-terminal-Gly-aminoethanethioate + L-cysteinyl-[cysteine desulfurase] + A + AMP + 2 H(+). Its pathway is cofactor biosynthesis; thiamine diphosphate biosynthesis. Its function is as follows. Catalyzes the ATP-dependent transfer of a sulfur to tRNA to produce 4-thiouridine in position 8 of tRNAs, which functions as a near-UV photosensor. Also catalyzes the transfer of sulfur to the sulfur carrier protein ThiS, forming ThiS-thiocarboxylate. This is a step in the synthesis of thiazole, in the thiamine biosynthesis pathway. The sulfur is donated as persulfide by IscS. The polypeptide is tRNA sulfurtransferase (Mannheimia succiniciproducens (strain KCTC 0769BP / MBEL55E)).